The sequence spans 123 residues: Large ribosomal subunit protein uL14 (123 aa).

This sequence belongs to the universal ribosomal protein uL14 family. Part of the 50S ribosomal subunit. Forms a cluster with proteins L3 and L19. In the 70S ribosome, L14 and L19 interact and together make contacts with the 16S rRNA in bridges B5 and B8.

In terms of biological role, binds to 23S rRNA. Forms part of two intersubunit bridges in the 70S ribosome. The chain is Large ribosomal subunit protein uL14 from Proteus mirabilis (strain HI4320).